A 289-amino-acid chain; its full sequence is Xyloglucan endotransglucosylase/hydrolase protein 15 (289 aa).

The signal sequence occupies residues M1 to A25. The GH16 domain occupies S26 to Y216. E102 serves as the catalytic Nucleophile. The active-site Proton donor is the E106. E106 serves as a coordination point for xyloglucan. N110 carries N-linked (GlcNAc...) asparagine glycosylation. Xyloglucan contacts are provided by residues H119–N121, D129–E131, D195–W196, and G200. Cystine bridges form between C224/C230 and C270/C284. R275 is a binding site for xyloglucan.

The protein belongs to the glycosyl hydrolase 16 family. XTH group 2 subfamily. In terms of processing, contains at least one intrachain disulfide bond essential for its enzymatic activity. In terms of tissue distribution, strongly expressed in roots, hypocotyls and cotyledons. Aslo detected in inflorescence stems and in the carpels and styles in flowers.

The protein localises to the secreted. It localises to the cell wall. It is found in the extracellular space. The protein resides in the apoplast. It catalyses the reaction breaks a beta-(1-&gt;4) bond in the backbone of a xyloglucan and transfers the xyloglucanyl segment on to O-4 of the non-reducing terminal glucose residue of an acceptor, which can be a xyloglucan or an oligosaccharide of xyloglucan.. The catalysed reaction is xyloglucan + H2O = xyloglucan oligosaccharides.. Its function is as follows. Catalyzes xyloglucan endohydrolysis (XEH) and/or endotransglycosylation (XET). Cleaves and religates xyloglucan polymers, an essential constituent of the primary cell wall, and thereby participates in cell wall construction of growing tissues. Has a high XET activity, but little or no XEH activity in vitro. Acceptor preferences are XXXGol &gt; XLLGol = XLFGol &gt; XXLGol &gt; XXFGol. This chain is Xyloglucan endotransglucosylase/hydrolase protein 15, found in Arabidopsis thaliana (Mouse-ear cress).